Reading from the N-terminus, the 278-residue chain is 4-deoxy-L-threo-5-hexosulose-uronate ketol-isomerase (278 aa).

The Zn(2+) site is built by H196, H198, E203, and H245.

Belongs to the KduI family. Zn(2+) is required as a cofactor.

The catalysed reaction is 5-dehydro-4-deoxy-D-glucuronate = 3-deoxy-D-glycero-2,5-hexodiulosonate. The protein operates within glycan metabolism; pectin degradation; 2-dehydro-3-deoxy-D-gluconate from pectin: step 4/5. In terms of biological role, catalyzes the isomerization of 5-dehydro-4-deoxy-D-glucuronate to 3-deoxy-D-glycero-2,5-hexodiulosonate. The polypeptide is 4-deoxy-L-threo-5-hexosulose-uronate ketol-isomerase (Enterobacter sp. (strain 638)).